A 68-amino-acid polypeptide reads, in one-letter code: Conotoxin Cal12.1p3 (68 aa).

Positions 1-21 are excised as a propeptide; that stretch reads DLITNSYTRGKPRHVTSWPKL.

In terms of processing, contains 4 disulfide bonds. Expressed by the venom duct.

It localises to the secreted. This chain is Conotoxin Cal12.1p3, found in Californiconus californicus (California cone).